The primary structure comprises 385 residues: Benzoylsuccinyl-CoA thiolase subunit BbsB (385 aa).

Arg-19 serves as a coordination point for CoA. Residue Cys-84 is the Acyl-thioester intermediate of the active site. CoA contacts are provided by Gly-121, Arg-193, Cys-204, and Cys-205.

The protein belongs to the thiolase-like superfamily. Thiolase family. Heterotetramer composed of two BbsA subunits and two BbsB subunits. BbsB forms homodimeric subcomplexes. Both BbsA and BbsB are essential for enzymatic activity.

The enzyme catalyses (S)-2-benzoylsuccinyl-CoA + CoA = benzoyl-CoA + succinyl-CoA. It functions in the pathway xenobiotic degradation; toluene degradation. Component of the BbsAB thiolase complex, which catalyzes the thiolytic cleavage of (S)-2-benzoylsuccinyl-CoA to succinyl-CoA and benzoyl-CoA, the final step of anaerobic toluene metabolism. This is Benzoylsuccinyl-CoA thiolase subunit BbsB from Thauera aromatica.